The following is an 893-amino-acid chain: UPF0182 protein CLK_3152 (893 aa).

Transmembrane regions (helical) follow at residues 9–29 (IPLFIIILFIAFFNKIINFII), 49–69 (AIIILMIPIFIIFFISIWMYY), 94–114 (LFFIFNFIVSIFLAYIFSSSY), 154–174 (VIISLLLFLVITTFIAYFILE), 202–222 (LAIVSGLIILFISFGHLIKIW), 246–266 (FYKIIVVITLISSIVTLLSIV), and 273–293 (VSICIGITIFLIVSQNIASFL).

This sequence belongs to the UPF0182 family.

Its subcellular location is the cell membrane. The chain is UPF0182 protein CLK_3152 from Clostridium botulinum (strain Loch Maree / Type A3).